Here is a 305-residue protein sequence, read N- to C-terminus: Ribonuclease BN (305 aa).

Zn(2+) is bound by residues H64, H66, D68, H69, H141, D212, and H270. Catalysis depends on D68, which acts as the Proton acceptor.

It belongs to the RNase Z family. RNase BN subfamily. In terms of assembly, homodimer. Zn(2+) is required as a cofactor.

Its function is as follows. Zinc phosphodiesterase, which has both exoribonuclease and endoribonuclease activities. This chain is Ribonuclease BN, found in Escherichia coli O81 (strain ED1a).